The following is a 344-amino-acid chain: Krueppel-like factor 3 (344 aa).

Positions 1–74 are repressor domain; that stretch reads MLMFDPVPVK…TVNKRGSPPA (74 aa). Lysine 10 participates in a covalent cross-link: Glycyl lysine isopeptide (Lys-Gly) (interchain with G-Cter in SUMO). The short motif at 60–68 is the 9aaTAD; inactive element; it reads EPVDLTVNK. The CTBP-binding motif motif lies at 61-65; that stretch reads PVDLT. The disordered stretch occupies residues 66–111; sequence VNKRGSPPAAGGSPSSLKFPSHRRASPGLSMPSSSPPIKKYSPPSP. Lysine 68 is covalently cross-linked (Glycyl lysine isopeptide (Lys-Gly) (interchain with G-Cter in SUMO2)). Composition is skewed to low complexity over residues 70–81 and 91–107; these read GSPPAAGGSPSS and SPGL…KKYS. 5 positions are modified to phosphoserine: serine 71, serine 91, serine 100, serine 107, and serine 110. A Glycyl lysine isopeptide (Lys-Gly) (interchain with G-Cter in SUMO2) cross-link involves residue lysine 195. Lysine 197 participates in a covalent cross-link: Glycyl lysine isopeptide (Lys-Gly) (interchain with G-Cter in SUMO); alternate. A Glycyl lysine isopeptide (Lys-Gly) (interchain with G-Cter in SUMO2); alternate cross-link involves residue lysine 197. Residues serine 215, serine 223, and serine 249 each carry the phosphoserine modification. Residues 235–254 are disordered; that stretch reads SVIVQPGKRPLPVESPDTQR. 3 consecutive C2H2-type zinc fingers follow at residues 259–283, 289–313, and 319–341; these read HRCD…RRTH, YKCT…FRKH, and FQCP…RKRH.

It belongs to the krueppel C2H2-type zinc-finger protein family. As to quaternary structure, monomer. Sumoylated with SUMO1. Sumoylation is enhanced by PIAS1, PIAS2alpha and PIAS2beta, and PIAS4, but not by Pc2. Enhances transcriptional repression, but has no effect on DNA binding. Sumoylation on Lys-197 is the major site. In terms of tissue distribution, in 8.5 day embryos, expressed in midbrain, anterior hindbrain and ventral forebrain. In 9 day embryos, expressed throughout ventral anterior half of embryo including midbrain-hindbrain junction, ventral midbrain, diencephalon and forebrain. At 10.5 days, distribution is more widespread with expression also found in developing limb buds. Widely expressed in the adult.

It localises to the nucleus. Binds to the CACCC box of erythroid cell-expressed genes. May play a role in hematopoiesis. This Mus musculus (Mouse) protein is Krueppel-like factor 3 (Klf3).